A 196-amino-acid chain; its full sequence is Acyl-homoserine-lactone synthase (196 aa).

The protein belongs to the autoinducer synthase family.

The enzyme catalyses a fatty acyl-[ACP] + S-adenosyl-L-methionine = an N-acyl-L-homoserine lactone + S-methyl-5'-thioadenosine + holo-[ACP] + H(+). In terms of biological role, required for the synthesis of a yet unknown N-aceyl-homoserine lactone (N-aceyl-HSL), an autoinducer molecule which binds to PhzR and thus regulates phenazine production. The polypeptide is Acyl-homoserine-lactone synthase (phzI) (Pseudomonas fluorescens).